The following is a 971-amino-acid chain: Protein ALWAYS EARLY 1 (971 aa).

A compositionally biased stretch (basic residues) spans 1-11 (MAPTRKSKSVN). 5 disordered regions span residues 1–40 (MAPTRKSKSVNKRFTNEASPDINFGSASKTKQRKKKLADK), 117–137 (SESEGEDHDASEVTRKHLKRK), 197–260 (IEDF…MFEN), 326–371 (GLLE…GLED), and 421–507 (PKES…KISL). The SANT domain occupies 40–98 (KLGPQWTKRELVRFYDAYRKYVGDWKKVAAAVRNNRSVEMVETLFCMNRAYLSLPEGTA). Basic and acidic residues-rich tracts occupy residues 209–219 (KQLDADDDASR), 332–350 (SSPHWEEERKTNNVDKKSN), and 424–440 (STQDKSLYTKESAEVDS). Residues 450–470 (SSQGPAKQLKTAKTTVESSSA) are compositionally biased toward polar residues.

As to expression, expressed ubiquitously in vegetative and reproductive tissues.

It is found in the nucleus. The chain is Protein ALWAYS EARLY 1 (ALY1) from Arabidopsis thaliana (Mouse-ear cress).